The sequence spans 314 residues: Beta-lactamase 2 (314 aa).

Positions 1-26 are cleaved as a signal peptide; sequence MLHTRIRRATLGAVAALSLVPVMACG. Residues 32-47 show a composition bias toward low complexity; it reads DAAEPAGSAPSSSAAA. The tract at residues 32–51 is disordered; the sequence is DAAEPAGSAPSSSAAAHKPG. The active-site Acyl-ester intermediate is the Ser96. 258-260 is a substrate binding site; that stretch reads KTG.

The protein belongs to the class-A beta-lactamase family.

It carries out the reaction a beta-lactam + H2O = a substituted beta-amino acid. The sequence is that of Beta-lactamase 2 (blaU) from Streptomyces cacaoi.